The following is a 601-amino-acid chain: Glutathione-regulated potassium-efflux system protein KefB (601 aa).

13 helical membrane-spanning segments follow: residues 4-24, 29-49, 55-75, 87-107, 115-135, 152-172, 177-197, 207-227, 230-250, 268-288, 291-311, 324-344, and 356-376; these read SDFLLAGVLFLFAAVAAVPLA, IGAVLGYLLAGIAIGPWGLGF, EILHFSELGVVFLMFIIGLEL, IFGVGAAQVLLSAALLAGLLM, AAVVGGIGLAMSSTAMALQLM, VLLFQDLAVIPALALVPLLAG, HFDWMKIGMKVLAFVGMLIGG, FIAASGVREVFTAATLLLVLG, LFMDALGLSMALGTFIAGVLL, GLLLGLFFISVGMSLNLGVLY, LLWVVISVVVLVAVKILVLYL, MQFAGVLSQGGEFAFVLFSTA, and ALLLVTVTLSMMTTPLLMKLV. The RCK N-terminal domain occupies 400–519; the sequence is KPQVIVVGFG…AGVTQFSRET (120 aa).

Belongs to the monovalent cation:proton antiporter 2 (CPA2) transporter (TC 2.A.37) family. KefB subfamily. Interacts with the regulatory subunit KefG.

It localises to the cell inner membrane. Its function is as follows. Pore-forming subunit of a potassium efflux system that confers protection against electrophiles. Catalyzes K(+)/H(+) antiport. The sequence is that of Glutathione-regulated potassium-efflux system protein KefB from Escherichia coli O1:K1 / APEC.